Here is a 206-residue protein sequence, read N- to C-terminus: Protein-methionine-sulfoxide reductase heme-binding subunit MsrQ (206 aa).

6 consecutive transmembrane segments (helical) span residues 7–27, 43–63, 77–97, 112–132, 142–162, and 172–192; these read IIIH…LLSG, FLGF…KVFY, LGLW…ALEL, GYLI…LSSW, WWFY…IHYV, and SMLY…GLFI.

This sequence belongs to the MsrQ family. In terms of assembly, heterodimer of a catalytic subunit (MsrP) and a heme-binding subunit (MsrQ). The cofactor is FMN. It depends on heme b as a cofactor.

It is found in the cell inner membrane. Part of the MsrPQ system that repairs oxidized periplasmic proteins containing methionine sulfoxide residues (Met-O), using respiratory chain electrons. Thus protects these proteins from oxidative-stress damage caused by reactive species of oxygen and chlorine generated by the host defense mechanisms. MsrPQ is essential for the maintenance of envelope integrity under bleach stress, rescuing a wide series of structurally unrelated periplasmic proteins from methionine oxidation. MsrQ provides electrons for reduction to the reductase catalytic subunit MsrP, using the quinone pool of the respiratory chain. The chain is Protein-methionine-sulfoxide reductase heme-binding subunit MsrQ from Pasteurella multocida (strain Pm70).